An 856-amino-acid chain; its full sequence is Dynamin-1 (856 aa).

One can recognise a Dynamin-type G domain in the interval 28–294 (DLDLPQIAVV…LTNHIRDTLP (267 aa)). The G1 motif stretch occupies residues 38-45 (GGQSAGKS). GDP-binding residues include serine 41, glycine 43, lysine 44, serine 45, serine 46, arginine 59, and glycine 60. Positions 64 to 66 (VTR) are G2 motif. Position 80 is a phosphotyrosine (tyrosine 80). A 3'-nitrotyrosine; alternate modification is found at tyrosine 125. At tyrosine 125 the chain carries Phosphotyrosine; alternate. Positions 136–139 (DLPG) are G3 motif. A G4 motif region spans residues 205–208 (TKLD). GDP contacts are provided by lysine 206, aspartate 208, aspartate 211, asparagine 236, arginine 237, and glutamine 239. The interval 235 to 238 (VNRS) is G5 motif. Serine 306 and serine 347 each carry phosphoserine. Tyrosine 354 bears the Phosphotyrosine mark. Serine 512 carries the phosphoserine modification. Residues 519 to 625 (LVIRKGWLTI…WKASFLRAGV (107 aa)) form the PH domain. The 92-residue stretch at 659–750 (VETIRNLVDS…IIGDINTTTV (92 aa)) folds into the GED domain. A disordered region spans residues 750 to 856 (VSTPMPPPVD…PIGSGKSIPS (107 aa)). A compositionally biased stretch (polar residues) spans 763-781 (LQVQSVPTGRRSPTSSPTP). Serine 774 and serine 778 each carry phosphoserine. Position 796 is an omega-N-methylarginine (arginine 796). The residue at position 822 (serine 822) is a Phosphoserine. Over residues 825 to 844 (PFGPPPQVPSRPNRAPPGVP) the composition is skewed to pro residues.

The protein belongs to the TRAFAC class dynamin-like GTPase superfamily. Dynamin/Fzo/YdjA family. Homodimer; homodimerization is mediated by the dynamin-type G domain which promotes assembly-stimulated GTPase activity. Homo-tetramer formed from two dimers in the absence of lipid. Oligomerizes into a helical polymer that self-assembles around the vesicle membrane, when associated to the menbrane through lipid binding. Interacts (via C-terminal proline-rich domain (PRD)) with SNX9 (via SH3 domain); this interaction allows regulation of DNM1 self-assembly during late stages of endocytic vesicle formation and supports DNM1's early functions in accelerating clathrin-coated pits (CCPs) maturation in non neuronals cell. Interacts (via C-terminal proline-rich domain (PRD)) with MYO1E (via SH3 domain); this interaction regulates receptor-mediated endocytosis. Interacts with SNX33 (via SH3 domain); this interaction decreases DNM1-dependent endocytosis. Interacts with DIAPH1. Interacts with GRB2 (via SH3 domain); this interaction mediates disassembly of DNM1 polymers, therefore modulates self-assembly. Forms a complex with BIN1 (via SH3 domain) and SH3GL2 (via SH3 domain). Forms a complex with SH3GL2 (via SH3 domain) and AMPH (via SH3 domain). Forms a complex with SH3GL2 (via SH3 domain) and SYNJ1. Interacts with AMPH. Interacts (via C-terminal proline-rich domain (PRD)) with SYT1; this interaction facilitates vesicle fission during clathrin-mediated endocytosis (CME). Interacts (via C-terminal proline-rich domain (PRD)) with PLCG1 (via SH3 domain); this interaction stimulates the release of GDP from DNM1 and enhances DNM1-dependent endocytosis. Interacts with SNPH; this interaction inhibits the binding of DNM1 to AMPH and DNM1-receptor-mediated endocytosis. Interacts with CAV1. Interacts with SH3GLB1 (via SH3 domain). Interacts with PACSIN1 (via SH3 domain), PACSIN2 (via SH3 domain) and PACSIN3 (via SH3 domain). Interacts with UNC119; this interaction decreases DNM1's GTPase activity and affects DNM1's interaction with AMPH. Interacts with AMPH. Interacts (GTP-bound form) with DNAJC6; this interaction allows clathrin-coated vesicle (CCV) formation at the plasma membrane. In terms of processing, phosphorylation at Ser-774 by GSK3B/GSK3-beta leads to inactivation of receptor-mediated endocytosis in non-neuronal cells. Dephosphorylation at Ser-774, through the EGFR downstream signaling, leads to activation and regulates early stages of clathrin-mediated endocytosis (CME).

It is found in the cell membrane. The protein resides in the membrane. Its subcellular location is the clathrin-coated pit. The protein localises to the cytoplasmic vesicle. It localises to the presynapse. It is found in the secretory vesicle. The protein resides in the chromaffin granule. The catalysed reaction is GTP + H2O = GDP + phosphate + H(+). Catalyzes the hydrolysis of GTP and utilizes this energy to mediate vesicle scission and participates in many forms of endocytosis, such as clathrin-mediated endocytosis or synaptic vesicle endocytosis as well as rapid endocytosis (RE). Associates to the membrane, through lipid binding, and self-assembles into rings and stacks of interconnected rings through oligomerization to form a helical polymer around the vesicle membrane leading to constriction of invaginated coated pits around their necks. Self-assembly of the helical polymer induces membrane tubules narrowing until the polymer reaches a length sufficient to trigger GTP hydrolysis. Depending on the curvature imposed on the tubules, membrane detachment from the helical polymer upon GTP hydrolysis can cause spontaneous hemifission followed by complete fission. May play a role in regulating early stages of clathrin-mediated endocytosis in non-neuronal cells through its activation by dephosphorylation via the signaling downstream of EGFR. Controls vesicle size at a step before fission, during formation of membrane pits, at hippocampal synapses. Controls plastic adaptation of the synaptic vesicle recycling machinery to high levels of activity. Mediates rapid endocytosis (RE), a Ca(2+)-dependent and clathrin- and K(+)-independent process in chromaffin cells. Microtubule-associated force-producing protein involved in producing microtubule bundles and able to bind and hydrolyze GTP. Through its interaction with DNAJC6, acts during the early steps of clathrin-coated vesicle (CCV) formation. The chain is Dynamin-1 from Bos taurus (Bovine).